A 701-amino-acid polypeptide reads, in one-letter code: Transcriptional regulator Kaiso (701 aa).

The BTB domain occupies 32–94 (CDVTVIVEDR…IYSSKIVRVR (63 aa)). Disordered stretches follow at residues 128-158 (GAGG…SPLP) and 181-311 (SSDD…QNQH). Residues 245–258 (TPSSQVQLTQNSLP) show a composition bias toward polar residues. Residues 259-273 (TNQQSSKNTSSTTQK) show a composition bias toward low complexity. A compositionally biased stretch (polar residues) spans 278-311 (VNANISKNPTPAANGFLSPTAQKQGTPNAVQNQH). The required for methylation dependent DNA-binding stretch occupies residues 470 to 609 (AKLDLDGLPN…QIRQYAYVNN (140 aa)). 3 consecutive C2H2-type zinc fingers follow at residues 501–523 (YICI…FNVH), 529–551 (YPCR…EIHH), and 557–580 (YQCL…RSVH). Positions 519–701 (HFNVHSWEKK…EFEFVIPESY (183 aa)) are required for sequence specific DNA-binding. The interval 644-664 (DIDPDEPQQPASEGNHANSAT) is disordered. The span at 652 to 664 (QPASEGNHANSAT) shows a compositional bias: polar residues.

As to quaternary structure, self associates. Interacts with tcf7l1-A, leading to repression of tcf7l1-A target genes. Interacts with ctnnd1, and this interaction may inhibit DNA-binding. Interacts with ncor1.

Its subcellular location is the nucleus. Functionally, transcriptional regulator with bimodal DNA-binding specificity. Binds to methylated CpG dinucleotides in the consensus sequence 5'-CGCG-3' and also binds to the non-methylated consensus sequence 5'-CTGCNA-3'. May recruit the N-CoR repressor complex to promote histone deacetylation and the formation of repressive chromatin structures in target gene promoters. Contributes to the repression of target genes of the Wnt signaling pathway and to the methylation-dependent repression of zygotic transcription prior to the mid-blastula transition (MBT). Also required for gastrulation movements. This Xenopus laevis (African clawed frog) protein is Transcriptional regulator Kaiso (zbtb33).